We begin with the raw amino-acid sequence, 243 residues long: Probable transcriptional regulatory protein BB_0025 (243 aa).

This sequence belongs to the TACO1 family.

The protein resides in the cytoplasm. The polypeptide is Probable transcriptional regulatory protein BB_0025 (Borreliella burgdorferi (strain ATCC 35210 / DSM 4680 / CIP 102532 / B31) (Borrelia burgdorferi)).